Consider the following 509-residue polypeptide: MSLVQIQLKTEDFKIYLQLPVRSQQHNFIYPLLFQEYIYVLVHDRDLKRSIFFANIGYEKKFRFQIVKRLINRMYKQIHLTTYYSNYSNKRTIYGLLKSFYYKLLSSGFSFLFEIPFFFKFISERKKILKSQNLRSIHSIFTFFEDNLSHLKYVLDLLIPNPPHPEILVQKIRYWVQDASSLHLLRFFLHEFCSVKSLITTNKSKRNERFLFLLYNSYICEYESIFLVLRNQSLHLGSMSFVTLFERNIFYGKIECFAELFAQDSQANLRLFKDTDPSMHYARYRGKSILASNGGLLLMPKWKYYIVNFWQCYFYLWFHTERINISQIDSHPFYLMDYISSIAQIPSMVRSKMLENLFLINNDMKIFETFVPIIPIIGSLAKAKFCNLLGNPISKPVWADFSDSDIIERFGRICRNIFHYYSGSSKKRSLYQIKYILRLSCARTLARKHKSTLRGFLQSLGLKLLEEFFTSEEQIIFLTFPNASLNLRGVSKGRIWYFDIVYINEQANF.

The protein belongs to the intron maturase 2 family. MatK subfamily.

The protein localises to the plastid. In terms of biological role, usually encoded in the trnK tRNA gene intron. Probably assists in splicing its own and other chloroplast group II introns. This is Maturase K from Cuscuta reflexa (Southern Asian dodder).